Consider the following 69-residue polypeptide: U2-agatoxin-Ao1g (69 aa).

Residues 1–20 (MKAIISLLLISAMVFSMIEA) form the signal peptide. Residues 21–34 (VPVEEGLQLFEGER) constitute a propeptide that is removed on maturation. 3 disulfide bridges follow: cysteine 36/cysteine 52, cysteine 43/cysteine 57, and cysteine 51/cysteine 67. A Leucine amide modification is found at leucine 68.

It belongs to the neurotoxin 01 (U2-agtx) family. In terms of tissue distribution, expressed by the venom gland.

The protein resides in the secreted. Functionally, insect active toxin causing rapid but reversible paralysis in crickets. No activity shown in mammals. Does not show effect on mammalian voltage-gated calcium channels. The protein is U2-agatoxin-Ao1g of Agelena orientalis (Funnel-web spider).